The primary structure comprises 385 residues: Succinyl-diaminopimelate desuccinylase (385 aa).

His73 serves as a coordination point for Zn(2+). Residue Asp75 is part of the active site. Asp106 contacts Zn(2+). Glu141 functions as the Proton acceptor in the catalytic mechanism. Glu142, Glu170, and His359 together coordinate Zn(2+).

This sequence belongs to the peptidase M20A family. DapE subfamily. Homodimer. Requires Zn(2+) as cofactor. It depends on Co(2+) as a cofactor.

The catalysed reaction is N-succinyl-(2S,6S)-2,6-diaminopimelate + H2O = (2S,6S)-2,6-diaminopimelate + succinate. It functions in the pathway amino-acid biosynthesis; L-lysine biosynthesis via DAP pathway; LL-2,6-diaminopimelate from (S)-tetrahydrodipicolinate (succinylase route): step 3/3. Catalyzes the hydrolysis of N-succinyl-L,L-diaminopimelic acid (SDAP), forming succinate and LL-2,6-diaminopimelate (DAP), an intermediate involved in the bacterial biosynthesis of lysine and meso-diaminopimelic acid, an essential component of bacterial cell walls. The polypeptide is Succinyl-diaminopimelate desuccinylase (Methylorubrum extorquens (strain CM4 / NCIMB 13688) (Methylobacterium extorquens)).